A 60-amino-acid polypeptide reads, in one-letter code: Large ribosomal subunit protein bL32 (60 aa).

Residues 1 to 46 (MAVQQNKKSPSKRGMHRSHNALNTPGTAIEPTTGEVHLRHHISPTG) are disordered. Basic residues predominate over residues 9–19 (SPSKRGMHRSH).

The protein belongs to the bacterial ribosomal protein bL32 family.

The protein is Large ribosomal subunit protein bL32 of Leptothrix cholodnii (strain ATCC 51168 / LMG 8142 / SP-6) (Leptothrix discophora (strain SP-6)).